The primary structure comprises 476 residues: Eukaryotic translation initiation factor 3 subunit L (476 aa).

A PCI domain is found at 257–452 (DAIRMFSHIL…DLDYALENDL (196 aa)).

It belongs to the eIF-3 subunit L family. Component of the eukaryotic translation initiation factor 3 (eIF-3) complex.

The protein resides in the cytoplasm. Functionally, component of the eukaryotic translation initiation factor 3 (eIF-3) complex, which is involved in protein synthesis of a specialized repertoire of mRNAs and, together with other initiation factors, stimulates binding of mRNA and methionyl-tRNAi to the 40S ribosome. The eIF-3 complex specifically targets and initiates translation of a subset of mRNAs involved in cell proliferation. The sequence is that of Eukaryotic translation initiation factor 3 subunit L from Aspergillus clavatus (strain ATCC 1007 / CBS 513.65 / DSM 816 / NCTC 3887 / NRRL 1 / QM 1276 / 107).